We begin with the raw amino-acid sequence, 487 residues long: uncharacterized protein (487 aa).

The next 3 membrane-spanning stretches (helical) occupy residues 10–30 (AALM…AADA), 45–65 (VISP…AVAA), and 439–459 (APVV…DFTL).

It is found in the cell membrane. This is an uncharacterized protein from Mycobacterium tuberculosis (strain CDC 1551 / Oshkosh).